The primary structure comprises 95 residues: Large ribosomal subunit protein uL23 (95 aa).

This sequence belongs to the universal ribosomal protein uL23 family. As to quaternary structure, part of the 50S ribosomal subunit. Contacts protein L29, and trigger factor when it is bound to the ribosome.

Functionally, one of the early assembly proteins it binds 23S rRNA. One of the proteins that surrounds the polypeptide exit tunnel on the outside of the ribosome. Forms the main docking site for trigger factor binding to the ribosome. In Desulfitobacterium hafniense (strain DSM 10664 / DCB-2), this protein is Large ribosomal subunit protein uL23.